A 146-amino-acid polypeptide reads, in one-letter code: Hemoglobin subunit beta (146 aa).

Residues 2–146 form the Globin domain; that stretch reads QWTAEEKQLI…VAHALARKYH (145 aa). Positions 63 and 92 each coordinate heme b.

Belongs to the globin family. As to quaternary structure, heterotetramer of two alpha chains and two beta chains. Red blood cells.

Functionally, involved in oxygen transport from the lung to the various peripheral tissues. This Turdus merula (Common blackbird) protein is Hemoglobin subunit beta (HBB).